Consider the following 307-residue polypeptide: Pseudouridine-5'-phosphate glycosidase (307 aa).

The active-site Proton donor is Glu-26. 2 residues coordinate substrate: Lys-88 and Val-108. Residue Asp-140 coordinates Mn(2+). 142–144 (SAD) provides a ligand contact to substrate. Lys-161 (nucleophile) is an active-site residue.

Belongs to the pseudouridine-5'-phosphate glycosidase family. As to quaternary structure, homotrimer. It depends on Mn(2+) as a cofactor.

It carries out the reaction D-ribose 5-phosphate + uracil = psi-UMP + H2O. Its function is as follows. Catalyzes the reversible cleavage of pseudouridine 5'-phosphate (PsiMP) to ribose 5-phosphate and uracil. Functions biologically in the cleavage direction, as part of a pseudouridine degradation pathway. The polypeptide is Pseudouridine-5'-phosphate glycosidase (Clostridium botulinum (strain Langeland / NCTC 10281 / Type F)).